A 294-amino-acid polypeptide reads, in one-letter code: Phosphatidylserine decarboxylase proenzyme (294 aa).

Catalysis depends on charge relay system; for autoendoproteolytic cleavage activity residues D100, H157, and S261. S261 serves as the catalytic Schiff-base intermediate with substrate; via pyruvic acid; for decarboxylase activity. S261 carries the post-translational modification Pyruvic acid (Ser); by autocatalysis.

It belongs to the phosphatidylserine decarboxylase family. PSD-B subfamily. Prokaryotic type I sub-subfamily. In terms of assembly, heterodimer of a large membrane-associated beta subunit and a small pyruvoyl-containing alpha subunit. Pyruvate serves as cofactor. Post-translationally, is synthesized initially as an inactive proenzyme. Formation of the active enzyme involves a self-maturation process in which the active site pyruvoyl group is generated from an internal serine residue via an autocatalytic post-translational modification. Two non-identical subunits are generated from the proenzyme in this reaction, and the pyruvate is formed at the N-terminus of the alpha chain, which is derived from the carboxyl end of the proenzyme. The autoendoproteolytic cleavage occurs by a canonical serine protease mechanism, in which the side chain hydroxyl group of the serine supplies its oxygen atom to form the C-terminus of the beta chain, while the remainder of the serine residue undergoes an oxidative deamination to produce ammonia and the pyruvoyl prosthetic group on the alpha chain. During this reaction, the Ser that is part of the protease active site of the proenzyme becomes the pyruvoyl prosthetic group, which constitutes an essential element of the active site of the mature decarboxylase.

It localises to the cell membrane. It catalyses the reaction a 1,2-diacyl-sn-glycero-3-phospho-L-serine + H(+) = a 1,2-diacyl-sn-glycero-3-phosphoethanolamine + CO2. Its pathway is phospholipid metabolism; phosphatidylethanolamine biosynthesis; phosphatidylethanolamine from CDP-diacylglycerol: step 2/2. Functionally, catalyzes the formation of phosphatidylethanolamine (PtdEtn) from phosphatidylserine (PtdSer). The protein is Phosphatidylserine decarboxylase proenzyme of Histophilus somni (strain 2336) (Haemophilus somnus).